Here is a 204-residue protein sequence, read N- to C-terminus: Large ribosomal subunit protein uL4 (204 aa).

The segment at 44 to 76 (RAGTHRTKGMGEISGTTKKPYRQKGTGSARQGS) is disordered.

This sequence belongs to the universal ribosomal protein uL4 family. As to quaternary structure, part of the 50S ribosomal subunit.

Functionally, one of the primary rRNA binding proteins, this protein initially binds near the 5'-end of the 23S rRNA. It is important during the early stages of 50S assembly. It makes multiple contacts with different domains of the 23S rRNA in the assembled 50S subunit and ribosome. Its function is as follows. Forms part of the polypeptide exit tunnel. This is Large ribosomal subunit protein uL4 from Gluconobacter oxydans (strain 621H) (Gluconobacter suboxydans).